We begin with the raw amino-acid sequence, 449 residues long: MITIKKGLDLPIAGTPAQVIHNGNTVNEVAMLGEEYVGMRPSMKVREGDVVKKGQVLFEDKKNPGVVFTAPASGTVVTINRGEKRVLQSVVIKVEGDEQITFTRYEAAQLASLSAEQVKQNLIESGLWTAFRTRPFSKVPALDAIPSSIFVNAMDTNPLAADPEVVLKEYETDFKDGLTVLTRLFNGQKPVYLCKDADSNIPLSPAIEGITIKSFSGVHPAGLVGTHIHFVDPVGATKQVWHLNYQDVIAIGKLFTTGELFTDRIISLAGPQVKNPRLVRTRLGANLSQLTANELNAGENRVISGSVLSGATAAGPVDYLGRYALQVSVLAEGREKELFGWIMPGSDKFSITRTVLGHFGKKLFNFTTAVHGGERAMVPIGAYERVMPLDIIPTLLLRDLAAGDTDSAQNLGCLELDEEDLALCTYVCPGKNNYGPMLRAALEKIEKEG.

The protein belongs to the NqrA family. As to quaternary structure, composed of six subunits; NqrA, NqrB, NqrC, NqrD, NqrE and NqrF.

It carries out the reaction a ubiquinone + n Na(+)(in) + NADH + H(+) = a ubiquinol + n Na(+)(out) + NAD(+). Functionally, NQR complex catalyzes the reduction of ubiquinone-1 to ubiquinol by two successive reactions, coupled with the transport of Na(+) ions from the cytoplasm to the periplasm. NqrA to NqrE are probably involved in the second step, the conversion of ubisemiquinone to ubiquinol. This chain is Na(+)-translocating NADH-quinone reductase subunit A, found in Actinobacillus pleuropneumoniae serotype 5b (strain L20).